Consider the following 525-residue polypeptide: Serine/threonine protein phosphatase 2A 55 kDa regulatory subunit B beta isoform (525 aa).

Residues 1–31 (MDPFSKSPDDDDLRPEAEAARRPQPQPQPRE) form a disordered region. WD repeat units lie at residues 48-87 (QEVDIISAIEFDKSGDHLATGDRGGRVVLFERTDSRDSAS) and 124-165 (EIEE…VKRI). A disordered region spans residues 169–191 (NLNTSQSSGNGTTSSSSSSSSRA). Residues 171-189 (NTSQSSGNGTTSSSSSSSS) show a composition bias toward low complexity. WD repeat units lie at residues 244–282 (AHDYHINSISNNSDGETYISADDLRINLWNLEISNQSFN), 293–333 (DLTE…LCDN), 352–390 (EIIASVSDIKFARDGRHILSRDYMTLKLWDINMDSGPVA), and 495–525 (DLSTKLLHLAWHPTENSIACAAANSLYMYYA).

It belongs to the phosphatase 2A regulatory subunit B family. In terms of assembly, PP2A consists of a common heteromeric enzyme, composed of a catalytic subunit (subunits C), a constant regulatory subunit (subunit A), and a variety of regulatory subunits such as subunits B (the R2/B/PR55/B55, R3/B''/PR72/PR130/PR59 and R5/B'/B56 families).

Functionally, the B regulatory subunit may modulate substrate selectivity and catalytic activity, and may also direct the localization of the catalytic enzyme to a particular subcellular compartment. The chain is Serine/threonine protein phosphatase 2A 55 kDa regulatory subunit B beta isoform from Oryza sativa subsp. indica (Rice).